A 567-amino-acid chain; its full sequence is Chitinase 3 (567 aa).

The signal sequence occupies residues 1-16 (MLYLLTIFSLLLPALA). Positions 23–313 (SNVAVYWGQN…ENMKAIVKKA (291 aa)) constitute a GH18 domain. Glu157 (proton donor) is an active-site residue. Asn159 carries N-linked (GlcNAc...) asparagine glycosylation. The segment at 313-471 (ASPGEETTSS…TSALSSSTTT (159 aa)) is disordered. 2 stretches are compositionally biased toward low complexity: residues 319–436 (TTSS…SLSS) and 444–471 (STTT…STTT).

The protein belongs to the glycosyl hydrolase 18 family. Chitinase class III subfamily.

The protein resides in the secreted. The enzyme catalyses Random endo-hydrolysis of N-acetyl-beta-D-glucosaminide (1-&gt;4)-beta-linkages in chitin and chitodextrins.. Its function is as follows. Chitinase involved in the remodeling of chitin in the fungal cell wall. Plays a role in cell separation. The sequence is that of Chitinase 3 (CHT3) from Candida albicans (strain SC5314 / ATCC MYA-2876) (Yeast).